Here is a 1267-residue protein sequence, read N- to C-terminus: Probable cation-transporting ATPase catp-6 (1267 aa).

Residues methionine 1 to arginine 32 are Extracellular-facing. Residues threonine 33 to tryptophan 53 traverse the membrane as a helical segment. At lysine 54–proline 189 the chain is on the cytoplasmic side. A helical membrane pass occupies residues isoleucine 190–valine 210. Topologically, residues threonine 211–glutamate 217 are extracellular. Residues tyrosine 218–tyrosine 238 traverse the membrane as a helical segment. Residues glutamine 239–lysine 390 are Cytoplasmic-facing. A helical membrane pass occupies residues phenylalanine 391–isoleucine 411. The Extracellular segment spans residues methionine 412–serine 424. A helical membrane pass occupies residues leucine 425–isoleucine 445. Topologically, residues asparagine 446–methionine 950 are cytoplasmic. Aspartate 476 (4-aspartylphosphate intermediate) is an active-site residue. Mg(2+) contacts are provided by aspartate 891 and aspartate 895. A helical transmembrane segment spans residues alanine 951–leucine 971. Over threonine 972 to phenylalanine 976 the chain is Extracellular. A helical transmembrane segment spans residues methionine 977 to phenylalanine 997. Over tyrosine 998–alanine 1013 the chain is Cytoplasmic. Residues serine 1014 to phenylalanine 1034 traverse the membrane as a helical segment. Residues serine 1035–serine 1058 lie on the Extracellular side of the membrane. A helical membrane pass occupies residues methionine 1059–tyrosine 1079. At serine 1080–alanine 1097 the chain is on the cytoplasmic side. The chain crosses the membrane as a helical span at residues leucine 1098–leucine 1118. The Extracellular segment spans residues lysine 1119–arginine 1132. A helical transmembrane segment spans residues isoleucine 1133–phenylalanine 1153. Residues valine 1154–tyrosine 1267 lie on the Cytoplasmic side of the membrane. Residues glutamate 1232–glutamate 1256 are disordered.

Belongs to the cation transport ATPase (P-type) (TC 3.A.3) family. Type V subfamily.

The protein localises to the membrane. The enzyme catalyses ATP + H2O = ADP + phosphate + H(+). This is Probable cation-transporting ATPase catp-6 from Caenorhabditis elegans.